We begin with the raw amino-acid sequence, 174 residues long: Male-enhanced antigen 1 (174 aa).

Disordered regions lie at residues 1–77 and 94–123; these read MAAV…PVGD and LHLP…IPMD. Acidic residues-rich tracts occupy residues 38–48, 65–77, and 101–110; these read SSEEPEEEQEE, PEQE…PVGD, and LESEDEDEEG. Phosphoserine is present on Ser-103.

In terms of biological role, may play an important role in spermatogenesis and/or testis development. This Sus scrofa (Pig) protein is Male-enhanced antigen 1 (MEA1).